Consider the following 435-residue polypeptide: Methionine aminopeptidase 2-2 (435 aa).

The tract at residues 1–92 (MAAQTTEKLQ…VPVSNLFPNN (92 aa)) is disordered. A compositionally biased stretch (low complexity) spans 24 to 33 (DAPAAGQAEA). Residues 34-45 (GEAEEDSDDEKD) show a composition bias toward acidic residues. Residues 59–73 (AKKKKRKSKKKKKGG) show a composition bias toward basic residues. Substrate is bound at residue His-197. A divalent metal cation is bound by residues Asp-217, Asp-228, and His-297. His-305 is a binding site for substrate. The a divalent metal cation site is built by Glu-330 and Glu-425.

It belongs to the peptidase M24A family. Methionine aminopeptidase eukaryotic type 2 subfamily. Requires Co(2+) as cofactor. The cofactor is Zn(2+). Mn(2+) serves as cofactor. It depends on Fe(2+) as a cofactor.

It is found in the cytoplasm. The enzyme catalyses Release of N-terminal amino acids, preferentially methionine, from peptides and arylamides.. Functionally, cotranslationally removes the N-terminal methionine from nascent proteins. The N-terminal methionine is often cleaved when the second residue in the primary sequence is small and uncharged (Met-Ala-, Cys, Gly, Pro, Ser, Thr, or Val). The protein is Methionine aminopeptidase 2-2 of Aspergillus clavatus (strain ATCC 1007 / CBS 513.65 / DSM 816 / NCTC 3887 / NRRL 1 / QM 1276 / 107).